The primary structure comprises 355 residues: Methionine import ATP-binding protein MetN (355 aa).

One can recognise an ABC transporter domain in the interval 8–250 (LKNIDITFTQ…PQEDLTQEFI (243 aa)). 42–49 (GYSGAGKS) contributes to the ATP binding site.

It belongs to the ABC transporter superfamily. Methionine importer (TC 3.A.1.24) family. In terms of assembly, the complex is composed of two ATP-binding proteins (MetN), two transmembrane proteins (MetI) and a solute-binding protein (MetQ).

Its subcellular location is the cell membrane. The enzyme catalyses L-methionine(out) + ATP + H2O = L-methionine(in) + ADP + phosphate + H(+). It catalyses the reaction D-methionine(out) + ATP + H2O = D-methionine(in) + ADP + phosphate + H(+). Its function is as follows. Part of the ABC transporter complex MetNIQ involved in methionine import. Responsible for energy coupling to the transport system. This chain is Methionine import ATP-binding protein MetN, found in Streptococcus thermophilus (strain ATCC BAA-250 / LMG 18311).